The chain runs to 194 residues: Lymphocyte antigen 6 complex locus protein G5b (194 aa).

The N-terminal stretch at 1-18 is a signal peptide; sequence MRACVLVHVLTMVGFALG. Residues 26–118 form the UPAR/Ly6 domain; the sequence is RTCHLCFLED…SAQHQSTLPG (93 aa). 5 cysteine pairs are disulfide-bonded: C28–C55, C31–C40, C47–C73, C81–C98, and C99–C104. N-linked (GlcNAc...) asparagine glycosylation is present at N182.

In terms of processing, N-glycosylated.

The protein resides in the secreted. This chain is Lymphocyte antigen 6 complex locus protein G5b (Ly6g5b), found in Rattus norvegicus (Rat).